The primary structure comprises 95 residues: Integration host factor subunit beta (95 aa).

The segment at Arg-56–Tyr-76 is disordered.

This sequence belongs to the bacterial histone-like protein family. In terms of assembly, heterodimer of an alpha and a beta chain.

Its function is as follows. This protein is one of the two subunits of integration host factor, a specific DNA-binding protein that functions in genetic recombination as well as in transcriptional and translational control. This Shewanella denitrificans (strain OS217 / ATCC BAA-1090 / DSM 15013) protein is Integration host factor subunit beta.